A 940-amino-acid polypeptide reads, in one-letter code: Valine--tRNA ligase (940 aa).

The 'HIGH' region motif lies at 47–57 (PNVTGILHMGH). Positions 564 to 568 (KLSKS) match the 'KMSKS' region motif. Lys567 is a binding site for ATP. Positions 873–937 (VEHIAKEKTR…ELQSILDKLA (65 aa)) form a coiled coil.

The protein belongs to the class-I aminoacyl-tRNA synthetase family. ValS type 1 subfamily. In terms of assembly, monomer.

It is found in the cytoplasm. It catalyses the reaction tRNA(Val) + L-valine + ATP = L-valyl-tRNA(Val) + AMP + diphosphate. Its function is as follows. Catalyzes the attachment of valine to tRNA(Val). As ValRS can inadvertently accommodate and process structurally similar amino acids such as threonine, to avoid such errors, it has a 'posttransfer' editing activity that hydrolyzes mischarged Thr-tRNA(Val) in a tRNA-dependent manner. The chain is Valine--tRNA ligase from Chlamydia abortus (strain DSM 27085 / S26/3) (Chlamydophila abortus).